A 414-amino-acid chain; its full sequence is Snake venom metalloproteinase (414 aa).

Residues 1–20 form the signal peptide; that stretch reads MIEVLLVTICLAVFPYQGSS. The propeptide occupies 21–190; it reads IILESGNVND…KASDLNFNSD (170 aa). A Pyrrolidone carboxylic acid modification is found at Gln191. Positions 197–393 constitute a Peptidase M12B domain; sequence RYVELVIVAD…YKPQCILNKP (197 aa). The Ca(2+) site is built by Glu200 and Asp284. 2 disulfide bridges follow: Cys308/Cys388 and Cys348/Cys355. His333 is a binding site for Zn(2+). The active site involves Glu334. 2 residues coordinate Zn(2+): His337 and His343. Ca(2+) is bound by residues Cys388 and Asn391. Residues 394 to 414 constitute a propeptide that is removed on maturation; the sequence is LRIDPVSTPVSGNELLEAGEE.

Belongs to the venom metalloproteinase (M12B) family. P-I subfamily. Monomer. Requires Zn(2+) as cofactor. As to expression, expressed by the venom gland.

It localises to the secreted. Snake venom metalloproteinase that impairs hemostasis in the envenomed animal. The chain is Snake venom metalloproteinase from Crotalus molossus molossus (Northern black-tailed rattlesnake).